We begin with the raw amino-acid sequence, 764 residues long: MVTTHNLGFPRIGAKRELKFGLERYWKGESSRDELKALGAELRRRHWHDQRDLDLAPLGDFAFYDQVLDMSFTLGNLPKRVQDFHGDALDNYFRVARGRSAQSAEEHAACCGGVAAGEMTKWFDTNYHYIVPEFHADTNFSLDPSRLLQQLAEANAQGVNAKPVILGPVTYLWLGKAKDVSDRLALLPKLLPVYGALLDTLTAQGVEWVQIDEPILVTELDAEWRQAFRTAYAALETRRIKLLLATYFGQLQDNLTLAASLPVDGLHIDAINARDEVDALVRELPAERVLSVGAINGRNIWKTDLNAALDWLEPLAKQLGDRLWLAPSCSLLHVPVDLASEEKLDAEIRSWLAFALQKLDELKVLATALNEGRDKVADALAANAAAIDSRRRSPRVNNPVVKAAIARIDAQLGNRASPYTQRASKQSARLNLPAFPTTTIGSFPQTAEIRQARSRFRAGALDEAGYRTAMRAEIERSVREQESLELDVLVHGEAERNDMVEYFGEQLDGYAFSQFGWVQSYGSRCVKPPILFGDISRPKAMTVEWIAYAQSLTRKPMKGMLTGPVTILNWSFVRDDQPRAVSCYQLALAIREEVLDLEKAGVRVIQIDEAALREGLPLRRAQWSEYLKWAVESFRITANGVQDDTQIHTHMCYSEFNDIIASIADMDADVITIETSRSDMELLDAFDTFKYPNEIGPGVYDIHSPNIPTQDHIVGLMKKAAERIPAERLWVNPDCGLKTRQWAEVIPALTNMVAAAKTLRNQVQ.

5-methyltetrahydropteroyltri-L-glutamate-binding positions include 16 to 19 (RELK) and Lys-121. L-homocysteine contacts are provided by residues 440–442 (IGS) and Glu-493. L-methionine contacts are provided by residues 440–442 (IGS) and Glu-493. 5-methyltetrahydropteroyltri-L-glutamate-binding positions include 524–525 (RC) and Trp-570. Asp-608 contacts L-homocysteine. Asp-608 serves as a coordination point for L-methionine. Glu-614 contacts 5-methyltetrahydropteroyltri-L-glutamate. Residues His-650, Cys-652, and Glu-674 each coordinate Zn(2+). The active-site Proton donor is the His-703. Cys-735 serves as a coordination point for Zn(2+).

This sequence belongs to the vitamin-B12 independent methionine synthase family. Zn(2+) is required as a cofactor.

It catalyses the reaction 5-methyltetrahydropteroyltri-L-glutamate + L-homocysteine = tetrahydropteroyltri-L-glutamate + L-methionine. The protein operates within amino-acid biosynthesis; L-methionine biosynthesis via de novo pathway; L-methionine from L-homocysteine (MetE route): step 1/1. In terms of biological role, catalyzes the transfer of a methyl group from 5-methyltetrahydrofolate to homocysteine resulting in methionine formation. This chain is 5-methyltetrahydropteroyltriglutamate--homocysteine methyltransferase, found in Burkholderia cenocepacia (strain HI2424).